A 751-amino-acid chain; its full sequence is Nibrin (751 aa).

Positions 24-83 (YVVGRKNCGILIENDQSISRNHAVLTVNFPVTSLSQTDEIPTLTIKDNSKYGTFVNEEKM) constitute an FHA domain. 2 BRCT domains span residues 105–181 (KFRV…SEFL) and 224–315 (GKTF…LAVI). A mediates interaction with SP100 region spans residues 111–328 (EPLVVCSSCL…TENYCNPQGQ (218 aa)). The interaction with MTOR, MAPKAP1 and RICTOR stretch occupies residues 221 to 403 (IFKGKTFVFL…SRKLSQETFN (183 aa)). Thr-337 carries the post-translational modification Phosphothreonine. Residue Ser-343 is modified to Phosphoserine; by ATM. A phosphoserine mark is found at Ser-347 and Ser-398. The tract at residues 389-418 (GLEQSSRKLSQETFNIKEAPKPSSKANNVA) is disordered. At Ser-433 the chain carries Phosphoserine; by CDK2. Residue Lys-436 forms a Glycyl lysine isopeptide (Lys-Gly) (interchain with G-Cter in ubiquitin) linkage. Disordered regions lie at residues 444–479 (KDWT…SSCK) and 491–550 (EQTQ…RKRK). The segment covering 446 to 457 (WTSQQQQNSIKN) has biased composition (polar residues). The Nuclear localization signal signature appears at 461–467 (PCTRKRE). Composition is skewed to basic and acidic residues over residues 502 to 518 (KSKE…READ) and 528 to 539 (ELNRKSPDRKPL). Ser-508 carries the post-translational modification Phosphoserine. Glycyl lysine isopeptide (Lys-Gly) (interchain with G-Cter in SUMO2) cross-links involve residues Lys-569 and Lys-580. The tract at residues 576-645 (VKVEKQEADD…ANSDGLQDSS (70 aa)) is disordered. 2 stretches are compositionally biased toward basic and acidic residues: residues 577 to 599 (KVEK…ERNR) and 615 to 636 (EDER…HEIA). Glycyl lysine isopeptide (Lys-Gly) (interchain with G-Cter in ubiquitin) cross-links involve residues Lys-684, Lys-688, and Lys-733. Residues 731–742 (QAKEESLADDLF) show a composition bias toward basic and acidic residues. Residues 731–751 (QAKEESLADDLFRYNPNVKRR) are disordered. The FxF/Y motif signature appears at 738-747 (ADDLFRYNPN).

This sequence belongs to the Nibrin family. As to quaternary structure, component of the MRN complex composed of two heterodimers RAD50 and MRE11 associated with a single NBN. The MRN complexes dimerize on DNA to form joined MRN-MRN oligomers required for DNA double-strand break repair. As part of the MRN complex, interacts with MCM9; the interaction recruits the complex to DNA repair sites. Component of the BASC complex, at least composed of BRCA1, MSH2, MSH6, MLH1, ATM, BLM, RAD50, MRE11 and NBN. Interacts with histone H2AX; this requires phosphorylation of H2AX on 'Ser-139' and promotes NBN recruitment to DNA damage sites. Interacts with (phosphorylated) MDC1; promoting NBN recruitment to DNA damage sites. Interacts with (phosphorylated) RAD17; promoting NBN recruitment to DNA damage sites. Interacts (via FxF/Y motif) with ATM. Interacts with HJURP. Interacts with INTS3. Interacts with KPNA2. Interacts with TERF2; interaction is disrupted upon NBN phosphorylation by CDK2. Interacts with (phosphorylated) RBBP8/CtIP; the interaction links the role of the MRN complex in DNA double-strand break sensing to resection. Interacts with SP100; recruits NBN to PML bodies. Interacts with ATF2. Interacts with MTOR, MAPKAP1 isoform 2 and RICTOR; indicative for an association with the mTORC2 complex. Interacts with MRNIP. Interacts with UFL1; promoting UFL1 recruitment to double-strand breaks following DNA damage. Interacts with CYREN (via XLF motif). In terms of processing, ubiquitinated at Lys-436 via 'Lys-6'-linked ubiquitin chains by RNF8, promoting NBN recruitment to DNA double-strand breaks (DSBs). Ubiquitinated at Lys-684 and Lys-688 via 'Lys-63'-linked ubiquitin chains by PELI1: ubiquitination takes place following PELI1 phosphorylation and promotes ATM activation and DNA repair. Ubiquitinated at Lys-733 via 'Lys-63'-linked ubiquitin chains by the SCF(SKP2) complex: ubiquitination takes place following SKP2 phosphorylation and promotes ATM activation and DNA repair. Post-translationally, phosphorylated by ATM in response of ionizing radiation, and such phosphorylation is responsible intra-S phase checkpoint control and telomere maintenance. Phosphorylated at Ser-433 by CDK2 in S/G2 phases abolishes interaction with TERF2, enabling DCLRE1B/Apollo recruitment to telomeres. Phosphorylation at Ser-433 in response to dysfunctional telomeres promotes non-homologous end joining repair at telomeres, while dephosphorylation by PPP1CA promotes microhomology-mediated end-joining (MMEJ) repair. High expression in the liver, heart and testis. Low expression in all other tissues analyzed. In the cerebellum the postmitotic Purkinje cells are marked specifically.

The protein localises to the nucleus. It is found in the chromosome. Its subcellular location is the PML body. The protein resides in the telomere. Component of the MRN complex, which plays a central role in double-strand break (DSB) repair, DNA recombination, maintenance of telomere integrity and meiosis. The MRN complex is involved in the repair of DNA double-strand breaks (DSBs) via homologous recombination (HR), an error-free mechanism which primarily occurs during S and G2 phases. The complex (1) mediates the end resection of damaged DNA, which generates proper single-stranded DNA, a key initial steps in HR, and is (2) required for the recruitment of other repair factors and efficient activation of ATM and ATR upon DNA damage. The MRN complex possesses single-strand endonuclease activity and double-strand-specific 3'-5' exonuclease activity, which are provided by MRE11, to initiate end resection, which is required for single-strand invasion and recombination. Within the MRN complex, NBN acts as a protein-protein adapter, which specifically recognizes and binds phosphorylated proteins, promoting their recruitment to DNA damage sites. Recruits MRE11 and RAD50 components of the MRN complex to DSBs in response to DNA damage. Promotes the recruitment of PI3/PI4-kinase family members ATM, ATR, and probably DNA-PKcs to the DNA damage sites, activating their functions. Mediates the recruitment of phosphorylated RBBP8/CtIP to DSBs, leading to cooperation between the MRN complex and RBBP8/CtIP to initiate end resection. RBBP8/CtIP specifically promotes the endonuclease activity of the MRN complex to clear DNA ends containing protein adducts. The MRN complex is also required for the processing of R-loops. NBN also functions in telomere length maintenance via its interaction with TERF2: interaction with TERF2 during G1 phase preventing recruitment of DCLRE1B/Apollo to telomeres. NBN also promotes DNA repair choice at dysfunctional telomeres: NBN phosphorylation by CDK2 promotes non-homologous end joining repair at telomeres, while unphosphorylated NBN promotes microhomology-mediated end-joining (MMEJ) repair. Enhances AKT1 phosphorylation possibly by association with the mTORC2 complex. The chain is Nibrin from Mus musculus (Mouse).